We begin with the raw amino-acid sequence, 2724 residues long: Eukaryotic translation initiation factor 2-alpha kinase 2 (2724 aa).

Topologically, residues 1–24 (MLNMVDQKKGINNGSSTGVINNIN) are cytoplasmic. The helical transmembrane segment at 25–45 (GKIKNEFIFMYLIAAGGFSCV) threads the bilayer. Residues 46–673 (YKIKKKKSNK…KFYIKRHNQK (628 aa)) are Extracellular-facing. The tract at residues 112–153 (KRERRGRRKEQQREQMGDKRREKRQQQRREKRKEQNTNTKKR) is disordered. Basic and acidic residues predominate over residues 120 to 146 (KEQQREQMGDKRREKRQQQRREKRKEQ). A helical transmembrane segment spans residues 674-694 (TYFFENIIFYHYIIMLFLDIE). Residues 695–718 (KYKNKFVSLFQYNLYRKLLKISKR) are Cytoplasmic-facing. Residues 719 to 739 (IVLMLHRIETNVICIFLLKHF) traverse the membrane as a helical segment. Residues 740–800 (EDYFIRKGIH…KKNIFNFFIE (61 aa)) are Extracellular-facing. Residues 801-821 (LFLNNIQINIFKKFEILYLII) form a helical membrane-spanning segment. At 822–832 (YFYNYFEKSKQ) the chain is on the cytoplasmic side. The helical transmembrane segment at 833-853 (FDIEGIGDIIYVWLSLINLFY) threads the bilayer. Over 854-876 (DDKGKCIKILSKIFAKLNKKLYY) the chain is Extracellular. A helical membrane pass occupies residues 877–897 (VYWGKLYIIMNWTTIVDTIFI). Residues 898-908 (RNVLSINREGN) are Cytoplasmic-facing. Residues 909–929 (YYWVIIVLKMINYFVNVAYTL) traverse the membrane as a helical segment. At 930–996 (TRMDIFFIKV…KKNYDIYTKY (67 aa)) the chain is on the extracellular side. A helical transmembrane segment spans residues 997-1017 (AILFIYCFIIQAYYFDTLFNI). The Cytoplasmic portion of the chain corresponds to 1018-2724 (RSLESNEIAN…GDIFLPDKCP (1707 aa)). Lys2029 serves as a coordination point for ATP. The 636-residue stretch at 2084 to 2719 (KHYFTKCGIL…KIISAGDIFL (636 aa)) folds into the Protein kinase domain. Residues 2120–2155 (INTLNEENQNMFCKNKEKKEENYKKIDTNISQFSEK) are a coiled coil. The Proton acceptor role is filled by Asp2229. The disordered stretch occupies residues 2479 to 2507 (EKMDKNKIAAQKKKKKKENKHPIGRRSTN). Residues 2488–2502 (AQKKKKKKENKHPIG) show a composition bias toward basic residues.

The protein belongs to the protein kinase superfamily. Ser/Thr protein kinase family. GCN2 subfamily. Auto-phosphorylated.

The protein resides in the membrane. The catalysed reaction is L-seryl-[protein] + ATP = O-phospho-L-seryl-[protein] + ADP + H(+). The enzyme catalyses L-threonyl-[protein] + ATP = O-phospho-L-threonyl-[protein] + ADP + H(+). Phosphorylates translation factor eIF2alpha in salivary gland sporozoites during dormancy, which leads to an inhibition of protein translation and accumulation of stalled mRNAs into granules. This is Eukaryotic translation initiation factor 2-alpha kinase 2 from Plasmodium berghei (strain Anka).